The following is a 683-amino-acid chain: MYASNKTYPSSRALPCLVEKVEAQHVDGAIRVRITTLEQKDWRQAKAAAVEAKYEAEREIQLRAHGNVKDIEITRESAFEHFATDPWAQHVGVDIEAQRERLLAEPGSRKILIIGAGFGGLLFAVRLIQTGRFTAEDITMIDSAAGFGGTWYWNRYPGLMCDTESYIYMPLLEETGYMPRNKYASGNEIREHAERIAQTYGLATRAMFRTVVEKLDWNEAEKVWTVAGSMLGIANNGQRDNMMSFQMVSQFTIMASGSFASPRVPDYPNIFDYKGKLFHTARWDYNYTGGSVENPKMLGLADKTVAIIGTGASAVQIVPQLAKYSNKLIVFQRTPAAVDARNNCPTDPVWWETETQAEGTGWQKRRQENFNAFTCNEKPLPSVNKVDDGWTRMPSFSILIGGPQGLDPDYVDRMRAVDMNRQEKIRARAHNIVQSEGSADLLTPWYPGWCKRPCFHDDYLSAFNLPNVELVDIRHNGISHFTANGLVANDIEYELDVIILSTGYTVPVTRASPSSRANIAVSGRNGTTMEAKWANGLATLHGVMTRDLPNLFFAGTSQAGACVNLVYALDQNATHVAYILANAFDRRPSDSARVIIEPTPGSEEAWAMQVLQRAAGFRGIAGCTPGYLNGYGMDASSLSPEQQINAARLAAWGEGIASYVRYLEAWRAKGDLNGIELTFFAKF.

N5 carries an N-linked (GlcNAc...) asparagine glycan. The helical transmembrane segment at 111-131 (ILIIGAGFGGLLFAVRLIQTG) threads the bilayer. Residues 150–153 (TWYW), 162–163 (DT), and Y168 contribute to the FAD site. 160–162 (MCD) provides a ligand contact to NADP(+). The N-linked (GlcNAc...) asparagine glycan is linked to N286. Residues 310-316 (TGASAVQ) and 333-334 (RT) contribute to the NADP(+) site. Residues N525 and N572 are each glycosylated (N-linked (GlcNAc...) asparagine).

It belongs to the FAD-binding monooxygenase family. Requires FAD as cofactor.

Its subcellular location is the membrane. It catalyses the reaction preaustinoid A + AH2 + O2 = preaustinoid A1 + A + H2O. It participates in secondary metabolite biosynthesis; terpenoid biosynthesis. Its function is as follows. FAD-binding monooxygenase; part of the gene cluster A that mediates the biosynthesis of austinol and dehydroaustinol, two fungal meroterpenoids. The first step of the pathway is the synthesis of 3,5-dimethylorsellinic acid by the polyketide synthase ausA. 3,5-dimethylorsellinic acid is then prenylated by the polyprenyl transferase ausN. Further epoxidation by the FAD-dependent monooxygenase ausM and cyclization by the probable terpene cyclase ausL lead to the formation of protoaustinoid A. Protoaustinoid A is then oxidized to spiro-lactone preaustinoid A3 by the combined action of the FAD-binding monooxygenases ausB and ausC, and the dioxygenase ausE. Acid-catalyzed keto-rearrangement and ring contraction of the tetraketide portion of preaustinoid A3 by ausJ lead to the formation of preaustinoid A4. The aldo-keto reductase ausK, with the help of ausH, is involved in the next step by transforming preaustinoid A4 into isoaustinone which is in turn hydroxylated by the P450 monooxygenase ausI to form austinolide. Finally, the cytochrome P450 monooxygenase ausG modifies austinolide to austinol. Austinol can be further modified to dehydroaustinol which forms a diffusible complex with diorcinol that initiates conidiation. Due to genetic rearrangements of the clusters and the subsequent loss of some enzymes, the end products of the Emericella nidulans austinoid biosynthesis clusters are austinol and dehydroaustinol, even if additional enzymes, such as the O-acetyltransferase ausQ and the cytochrome P450 monooxygenase ausR are still functional. This chain is FAD-binding monooxygenase ausC, found in Emericella nidulans (strain FGSC A4 / ATCC 38163 / CBS 112.46 / NRRL 194 / M139) (Aspergillus nidulans).